The primary structure comprises 136 residues: Ubiquinol-cytochrome-c reductase complex assembly factor 2 (136 aa).

The N-terminal 13 residues, M1–C13, are a transit peptide targeting the mitochondrion.

In terms of assembly, interacts with UQCC1.

It is found in the mitochondrion matrix. The protein resides in the mitochondrion nucleoid. Its subcellular location is the mitochondrion. It localises to the mitochondrion intermembrane space. The protein localises to the mitochondrion inner membrane. Required for the assembly of the ubiquinol-cytochrome c reductase complex (mitochondrial respiratory chain complex III or cytochrome b-c1 complex). Plays a role in the modulation of respiratory chain activities such as oxygen consumption and ATP production and via its modulation of the respiratory chain activity can regulate skeletal muscle differentiation and insulin secretion by pancreatic beta-cells. Involved in cytochrome b translation and/or stability. In Rattus norvegicus (Rat), this protein is Ubiquinol-cytochrome-c reductase complex assembly factor 2 (Uqcc2).